Consider the following 338-residue polypeptide: Glycerol-3-phosphate dehydrogenase [NAD(P)+] (338 aa).

NADPH-binding residues include Ser13, Trp14, and Lys108. Sn-glycerol 3-phosphate-binding residues include Lys108, Gly139, and Ser141. Ala143 provides a ligand contact to NADPH. Sn-glycerol 3-phosphate-binding residues include Lys194, Asp247, Ser257, Arg258, and Asn259. Catalysis depends on Lys194, which acts as the Proton acceptor. Arg258 contributes to the NADPH binding site. NADPH is bound by residues Val282 and Glu284.

It belongs to the NAD-dependent glycerol-3-phosphate dehydrogenase family.

It localises to the cytoplasm. The catalysed reaction is sn-glycerol 3-phosphate + NAD(+) = dihydroxyacetone phosphate + NADH + H(+). The enzyme catalyses sn-glycerol 3-phosphate + NADP(+) = dihydroxyacetone phosphate + NADPH + H(+). It participates in membrane lipid metabolism; glycerophospholipid metabolism. Catalyzes the reduction of the glycolytic intermediate dihydroxyacetone phosphate (DHAP) to sn-glycerol 3-phosphate (G3P), the key precursor for phospholipid synthesis. This chain is Glycerol-3-phosphate dehydrogenase [NAD(P)+], found in Listeria monocytogenes serotype 4a (strain HCC23).